A 423-amino-acid chain; its full sequence is Deferrochelatase (423 aa).

The tat-type signal signal peptide spans 1 to 35; the sequence is MQYEDKNGVNEPSRRRLLKGIGALALAGSCPVAHA. Heme b-binding positions include 236 to 238, His-329, 334 to 336, and Arg-347; these read GTA and NPR.

The protein belongs to the DyP-type peroxidase family. EfeB subfamily. As to quaternary structure, the heme-bound EfeB forms a homodimer whereas the apo-form mainly exists as a monomer. Part of a ferrous iron transporter composed of EfeU, EfeO and EfeB. Heme b serves as cofactor. In terms of processing, predicted to be exported by the Tat system. The position of the signal peptide cleavage has not been experimentally proven.

Its subcellular location is the periplasm. The catalysed reaction is heme b + 2 H(+) = protoporphyrin IX + Fe(2+). Functionally, involved in the recovery of exogenous heme iron. Extracts iron from heme while preserving the protoporphyrin ring intact. Also displays peroxidase activity on guaiacol and catechol in vitro. The deferrochelatase activity appears to be closely related to the peroxidation activity, but the link is unclear. The sequence is that of Deferrochelatase (efeB) from Escherichia coli O157:H7.